A 233-amino-acid polypeptide reads, in one-letter code: Ribosomal RNA large subunit methyltransferase E (233 aa).

Gly-80, Trp-82, Asp-108, Asp-124, and Asp-148 together coordinate S-adenosyl-L-methionine. Residue Lys-188 is the Proton acceptor of the active site.

It belongs to the class I-like SAM-binding methyltransferase superfamily. RNA methyltransferase RlmE family.

The protein localises to the cytoplasm. The enzyme catalyses uridine(2552) in 23S rRNA + S-adenosyl-L-methionine = 2'-O-methyluridine(2552) in 23S rRNA + S-adenosyl-L-homocysteine + H(+). Functionally, specifically methylates the uridine in position 2552 of 23S rRNA at the 2'-O position of the ribose in the fully assembled 50S ribosomal subunit. The protein is Ribosomal RNA large subunit methyltransferase E of Ruegeria pomeroyi (strain ATCC 700808 / DSM 15171 / DSS-3) (Silicibacter pomeroyi).